We begin with the raw amino-acid sequence, 101 residues long: Apolipoprotein C-II (101 aa).

Residues 1–22 (MGTRFLLALFLVLLVLGFEVQG) form the signal peptide. Residues 66–74 (TVDEKLRDM) are lipid binding. The tract at residues 78–101 (STAAMSTYAGILTDQVLSMLKGEE) is lipoprotein lipase cofactor.

Belongs to the apolipoprotein C2 family. In terms of processing, proapolipoprotein C-II is synthesized as a sialic acid containing glycoprotein which is subsequently desialylated prior to its proteolytic processing. Post-translationally, proapolipoprotein C-II, the major form found in plasma undergoes proteolytic cleavage of its N-terminal hexapeptide to generate apolipoprotein C-II, which occurs as the minor form in plasma.

The protein resides in the secreted. In terms of biological role, component of chylomicrons, very low-density lipoproteins (VLDL), low-density lipoproteins (LDL), and high-density lipoproteins (HDL) in plasma. Plays an important role in lipoprotein metabolism as an activator of lipoprotein lipase. Both proapolipoprotein C-II and apolipoprotein C-II can activate lipoprotein lipase. The chain is Apolipoprotein C-II (APOC2) from Plecturocebus moloch (Dusky titi monkey).